Reading from the N-terminus, the 598-residue chain is uncharacterized protein (598 aa).

Residues 39–322 (LIMVFVFVTV…LSNQFNMIQM (284 aa)) enclose the ABC transmembrane type-1 domain. Transmembrane regions (helical) follow at residues 40–60 (IMVFVFVTVSSILGVLSPYLI), 80–100 (MLILGTIYALTSLLFWLQGKI), 150–170 (VLGNSIIQFFSGIVTLAGAVI), 177–197 (VILSLVTLSIVPLTVLITQIV), and 273–293 (LGFALISGFGGWLALKDIITV). The region spanning 355–589 (IEFKNVWFSY…RGFYYELFTS (235 aa)) is the ABC transporter domain. ATP is bound at residue 388–395 (GPTGSGKT).

The protein belongs to the ABC transporter superfamily.

It is found in the cell membrane. This is an uncharacterized protein from Thermotoga maritima (strain ATCC 43589 / DSM 3109 / JCM 10099 / NBRC 100826 / MSB8).